Consider the following 344-residue polypeptide: MTAREGRAPLVRRVAVYGAVGLAAIAGVAIWSGAASHRGADTARLSADAAARDGASAASPPPALPASAGLPAPLAGSSAPRLPLDAGGHLAKSRAVRDFFDYCLSARSDLSATALDALVVRGIAAQLDGTIAQPEALDVWHRYRAYLDALAKLPDAGAVDKSDLGALQLALDQRVSIAYRTLGDWSQPFFGAEQWRQRYDLARLKIAQDRTLTEAQKAERLAALAQQMPADERAARQKADRQQAAIDQIAQLQKSGATPDAMRAQLTQTLGPDAAARVAQMQQDDASWQSRYADYAAQRAQIDAAGLSPQDRDAQIASLRQRMFTKPGEAVRAASLDRGAAAAR.

Residues 14–34 (VAVYGAVGLAAIAGVAIWSGA) traverse the membrane as a helical segment.

The protein belongs to the lipase chaperone family.

The protein localises to the cell inner membrane. Functionally, may be involved in the folding of the extracellular lipase during its passage through the periplasm. The sequence is that of Lipase chaperone from Burkholderia ambifaria (strain MC40-6).